The chain runs to 730 residues: Multifunctional procollagen lysine hydroxylase and glycosyltransferase (730 aa).

The N-terminal stretch at methionine 1 to alanine 16 is a signal peptide. The required for glycosyltransferase activity stretch occupies residues threonine 20–glutamate 280. UDP-binding positions include valine 30 to threonine 32 and aspartate 98 to tyrosine 100. 3 residues coordinate Mn(2+): aspartate 98, aspartate 101, and histidine 242. Glycine 245–lysine 248 contributes to the UDP binding site. An intrachain disulfide couples cysteine 268 to cysteine 271. Residues valine 281–glutamate 507 form an accessory region region. A disulfide bridge links cysteine 554 with cysteine 690. Arginine 590 and tyrosine 648 together coordinate 2-oxoglutarate. A Fe2OG dioxygenase domain is found at glutamate 639 to proline 730. Fe cation contacts are provided by histidine 659 and aspartate 661. The segment at threonine 664–leucine 707 is important for dimerization. The N-linked (GlcNAc...) asparagine glycan is linked to asparagine 689. Histidine 711 serves as a coordination point for Fe cation. Arginine 721 serves as a coordination point for 2-oxoglutarate.

Homodimer. Fe(2+) serves as cofactor. L-ascorbate is required as a cofactor. It depends on Mn(2+) as a cofactor.

It localises to the rough endoplasmic reticulum. The protein localises to the endoplasmic reticulum lumen. It is found in the endoplasmic reticulum membrane. The protein resides in the secreted. Its subcellular location is the extracellular space. It catalyses the reaction L-lysyl-[collagen] + 2-oxoglutarate + O2 = (5R)-5-hydroxy-L-lysyl-[collagen] + succinate + CO2. It carries out the reaction (5R)-5-hydroxy-L-lysyl-[collagen] + UDP-alpha-D-galactose = (5R)-5-O-(beta-D-galactosyl)-5-hydroxy-L-lysyl-[collagen] + UDP + H(+). The enzyme catalyses (5R)-5-O-(beta-D-galactosyl)-5-hydroxy-L-lysyl-[collagen] + UDP-alpha-D-glucose = (5R)-5-O-[alpha-D-glucosyl-(1-&gt;2)-beta-D-galactosyl]-5-hydroxy-L-lysyl-[collagen] + UDP + H(+). Multifunctional enzyme that catalyzes a series of post-translational modifications on Lys residues in procollagen. Catalyzes the formation of hydroxylysine residues in -Xaa-Lys-Gly- sequences in type IV collagens. Transfers galactose onto hydroxylysine groups, giving rise to galactosyl 5-hydroxylysine. Catalyzes the subsequent transfer of glucose moieties, giving rise to 1,2-glucosylgalactosyl-5-hydroxylysine residues. Essential for normal biosynthesis and secretion of type IV collagens. Essential for normal stability of the basement membrane. The polypeptide is Multifunctional procollagen lysine hydroxylase and glycosyltransferase (let-268) (Caenorhabditis elegans).